A 245-amino-acid polypeptide reads, in one-letter code: Polyhedrin (245 aa).

It belongs to the polyhedrin family.

In terms of biological role, major component of the virus occlusion bodies, which are large proteinaceous structures (polyhedra), that protect the virus from the outside environment for extended periods until they are ingested by insect larvae. This is Polyhedrin (PH) from Bombyx mori nuclear polyhedrosis virus (BmNPV).